The sequence spans 293 residues: Ribosomal protein L11 methyltransferase (293 aa).

Thr-145, Gly-166, Asp-188, and Asn-230 together coordinate S-adenosyl-L-methionine.

It belongs to the methyltransferase superfamily. PrmA family.

The protein localises to the cytoplasm. The enzyme catalyses L-lysyl-[protein] + 3 S-adenosyl-L-methionine = N(6),N(6),N(6)-trimethyl-L-lysyl-[protein] + 3 S-adenosyl-L-homocysteine + 3 H(+). Functionally, methylates ribosomal protein L11. The protein is Ribosomal protein L11 methyltransferase of Salmonella arizonae (strain ATCC BAA-731 / CDC346-86 / RSK2980).